The chain runs to 573 residues: Sulfite oxidase, mitochondrial (573 aa).

Residues 1 to 34 (MRLLRPSWAGLLRGRHHQHQRHHRRLLLTTSRGS) constitute a mitochondrion transit peptide. Basic residues predominate over residues 14-26 (GRHHQHQRHHRRL). The disordered stretch occupies residues 14-50 (GRHHQHQRHHRRLLLTTSRGSNGEREEQQHSQWSSPG). Positions 108 to 186 (LPTYRAEEVE…LEGFRIGNLE (79 aa)) constitute a Cytochrome b5 heme-binding domain. Heme b contacts are provided by histidine 144 and histidine 168. Residues 190 to 199 (VTNVDDELGS) form a hinge region. Residues 200–423 (PWSQEPQRHA…DSHWQQNDYK (224 aa)) form a moco domain region. Mo-molybdopterin is bound by residues 240–244 (YVRNH), cysteine 287, aspartate 344, histidine 383, arginine 388, and 399–401 (NVK). Residues 424-567 (GFSPSTDWDT…RGVLANAYHK (144 aa)) form a homodimerization region.

The cofactor is heme b. Mo-molybdopterin is required as a cofactor. As to expression, expressed in the ensheathing glia with relatively weak expression in the CNS cortex (at protein level).

The protein resides in the mitochondrion intermembrane space. It carries out the reaction sulfite + O2 + H2O = sulfate + H2O2. The protein operates within energy metabolism; sulfur metabolism. Functionally, required in ensheathing glial cells for normal larval locomotion. Oxidizes sulfite which is required to maintain glutamate homeostasis and as a consequence, neuronal network function. The sequence is that of Sulfite oxidase, mitochondrial from Drosophila melanogaster (Fruit fly).